The primary structure comprises 566 residues: MQPIISFEQFNFQYKHAAQPTVKDVTFHIYPGEKVLIAGRSGSGKSTLAHCMNGLIPFSYEGTSTGTILIDGKDPRKGSIFEQSKQVGTILQDQDAQFIGLTVEEDVAFYLENECVNEDDMKKIVSESLKKVKMHNFHKQSPHELSGGQKQTVSLAGLLTTNAHILLFDEPLANLDPVSSLHTVELIKDIHKQYNKTIVIIEHRIEEMLNLDLDKIILIDEGEIVAIGTPEKILASNILPSIGLREPMYIEGLKRLHFDSNNDVIYPLENLQRESVSGVINEWMEKQTFCKDTPTKKELLKVENLSFSYPNKQKVLDNVNFSLFKGEIVALLGHNGAGKSTLAHSLIGINKTKNDRILIDGVNINSWSIRKRGEVISYVMQNPNHMITQATVMEEISFSLKLKKFSKEEIKVRAEETLKICDLYPFRNWPIQALSYGQKKRLTIASVLTTNPKLIILDEPTAGQDYYHYKQFMTFIRKLAAKGLSFIFITHDMNLALEYADRAIVLKEGEVIANNTASIVLGHPETLKRANLKESSLFKLVKFSGIANPERFMELYFDDIRREEGV.

2 consecutive ABC transporter domains span residues 5 to 246 and 300 to 533; these read ISFE…GLRE and LKVE…ANLK. ATP-binding positions include 39-46 and 333-340; these read GRSGSGKS and GHNGAGKS.

It belongs to the ABC transporter superfamily.

It localises to the cell membrane. Its function is as follows. Probably part of an ABC transporter complex. Responsible for energy coupling to the transport system. The chain is Putative ABC transporter ATP-binding protein BCE_2668 from Bacillus cereus (strain ATCC 10987 / NRS 248).